The primary structure comprises 782 residues: MSVNSRKRKVATKAAPVQSSSDEELADGLLDGILSHSEDESEDDQDAEDTDASSVIEGLSDEDFEDEEDSGDEAEEIRKQMRNLNTSGGSQQRKTRQPAHERLDDGADGELEGEEDESLKPNYTVTTDAHGQVRYLYKEIDPVYESDDSDAEATNTIGNIPLTYYDEYPHIGYDINGKKIMRPAKGEALDALLDSIDIPKGWTGLTDPQTGKPLNLSEEELDVLKRLTRNEVVEDGYDPYPEMVAYFSGKQEIMPLSAAPEPKRRFIPSKHEAKRVMKIVKAIREGRIKPYKAPEEREEDEQISYDVWADEKPRPEHSMHIPAPKLPPPGYEASYHPPPEYLPDKAEEEAWLQADEEDREKDFLPKNYEALRKVPGYETFVKERFERSLDLYLAPRVRRNRLNIDPESLLPKLPDPEDLKPFPTTCAAIFRGQEGRVRCVSVDPQGIFVASGGDDGYVRIWELLTGRQVWNAKLSDEEAVDAVQWRPTKDASVLAAASGEHVYLIVPFTLLSPDVEQSSRDVLDAGWGYATSKPSTAANGEAPKQSPGKWSRPGSRMENKGILVQIEVRSAVKIINWHRRGDYFATVSPRGQSTAVAIHTVSKHLTQLPFRRLKGIAQTAQFHPSKAIFFVATRNTIRSYDLAKQELVKILQPGAKWISSIDVHPGGDNIIVGTYDKRLLWHDLDLSNKPYKTLRFHKEAIRAVKFHQGGLPLFADASDDGSLQIFHGKVVDDLMENATIVPLKVLRGHKVKSRLGVMDLDWHPREPWCVSAGADGTLRLWN.

The span at 1–11 (MSVNSRKRKVA) shows a compositional bias: basic residues. Residues 1-120 (MSVNSRKRKV…LEGEEDESLK (120 aa)) are disordered. Acidic residues-rich tracts occupy residues 39 to 51 (DESE…EDTD) and 59 to 75 (LSDE…DEAE). Polar residues predominate over residues 82 to 92 (RNLNTSGGSQQ). Positions 106–117 (GADGELEGEEDE) are enriched in acidic residues. WD repeat units follow at residues 432-471 (GQEG…QVWN) and 475-516 (SDEE…PDVE). Residues 533–556 (KPSTAANGEAPKQSPGKWSRPGSR) form a disordered region. WD repeat units follow at residues 612 to 652 (RLKG…KILQ), 653 to 692 (PGAK…KPYK), 696 to 736 (FHKE…DLME), and 752 to 782 (KSRL…RLWN).

Belongs to the WD repeat BOP1/ERB1 family. Component of the NOP7 complex, composed of ERB1, NOP7 and YTM1. The complex is held together by ERB1, which interacts with NOP7 via its N-terminal domain and with YTM1 via a high-affinity interaction between the seven-bladed beta-propeller domains of the 2 proteins. The NOP7 complex associates with the 66S pre-ribosome.

It is found in the nucleus. It localises to the nucleolus. The protein resides in the nucleoplasm. Component of the NOP7 complex, which is required for maturation of the 25S and 5.8S ribosomal RNAs and formation of the 60S ribosome. This Phaeosphaeria nodorum (strain SN15 / ATCC MYA-4574 / FGSC 10173) (Glume blotch fungus) protein is Ribosome biogenesis protein ERB1.